A 326-amino-acid polypeptide reads, in one-letter code: Archaeal actin homolog (326 aa).

ATP-binding positions include 10 to 14, serine 179, glutamine 231, 285 to 288, and glutamine 311; these read YGDTK and GGSN.

This sequence belongs to the thermophilic archaeal actin family.

Its function is as follows. Polymerizes into bundles of filaments, forming a helix with a filament width of 5.5 nm and an axial repeating unit of 5.5 nm. Polymerization of Ta0583 requires NTP and is optimal with ATP, but GTP, UTP, CTP, and even the deoxy form of NTP can also support the polymerization reaction. Nucleoside diphosphate or AMP-PNP does not support polymerization. This Thermoplasma acidophilum (strain ATCC 25905 / DSM 1728 / JCM 9062 / NBRC 15155 / AMRC-C165) protein is Archaeal actin homolog.